A 585-amino-acid polypeptide reads, in one-letter code: MELLTFRDVAIEFSPEEWKCLDPAQQNLYRDVMLENYRNLISLGVAISNPDLVIYLEQRKEPYKVKIHETVAKHPAVCSHFTQDFLPVQGIEDSFHKLILRRYEKCGHENLELRKSCKRKVQKGGYNEFNQCLSTIQSKIFQCNVHVKVFSTFSNSNQRRIRHTGEKHFKECGKSFQKFSDLTQHQGIHAGEKPYTCEECGKDFKWYLIFNEYEIIHTGEKPFTCEECGNIFTTSSNFAKHKVHTGEKSYKYEECGKAFNRSSTLTKHKRIHAEEKPFTCEECGKIITSSSNVAKHKKIHTGEKLYKCQECGKVFNRSTTLTKHNRIHTGEKPYTCEECGKAFSRSSVLNEHKRIHTGEKPYKCEQCGKAFRQSATLNKHKSIHTGEKPYTCEECGKAFSRFTTLNEHKRIHTGERPHKCEECGKAFGWSTDLNKHKIIHTGEKPYKCEECGKAFGWSAYLSKHKKIHTGEKPYRCEECGKAFLCSRALNKHKTIHTGEKPYECEECGKAFGWSTYLSKHKKIHTGEKPYRCEECGKAFRRSRVLNKYKTIHTGDKTPKCKGCGKAFKWSSYLNQHNKIYTGEKL.

The region spanning 4-75 is the KRAB domain; it reads LTFRDVAIEF…KIHETVAKHP (72 aa). The C2H2-type 1; degenerate zinc-finger motif lies at 141–163; that stretch reads FQCNVHVKVFSTFSNSNQRRIRH. The C2H2-type 2; degenerate zinc finger occupies 167–189; the sequence is KHFKECGKSFQKFSDLTQHQGIH. Residues 195-217 form a C2H2-type 3; degenerate zinc finger; it reads YTCEECGKDFKWYLIFNEYEIIH. The C2H2-type 4 zinc finger occupies 223-244; it reads FTCEECGNIFTTSSNFAKHKVH. The C2H2-type 5; degenerate zinc finger occupies 250 to 272; sequence YKYEECGKAFNRSSTLTKHKRIH. 9 C2H2-type zinc fingers span residues 278–300, 306–328, 334–356, 362–384, 390–412, 418–440, 446–468, 474–496, and 502–524; these read FTCE…KKIH, YKCQ…NRIH, YTCE…KRIH, YKCE…KSIH, HKCE…KIIH, YKCE…KKIH, YRCE…KTIH, and YECE…KKIH. Residues 530–552 form a C2H2-type 15; degenerate zinc finger; it reads YRCEECGKAFRRSRVLNKYKTIH. A C2H2-type 16; degenerate zinc finger spans residues 558–580; that stretch reads PKCKGCGKAFKWSSYLNQHNKIY.

It belongs to the krueppel C2H2-type zinc-finger protein family.

Its subcellular location is the nucleus. Its function is as follows. May be involved in transcriptional regulation. The sequence is that of Zinc finger protein 732 (ZNF732) from Homo sapiens (Human).